We begin with the raw amino-acid sequence, 131 residues long: Profilin-1 (131 aa).

The protein belongs to the profilin family. As to quaternary structure, occurs in many kinds of cells as a complex with monomeric actin in a 1:1 ratio.

It is found in the cytoplasm. The protein localises to the cytoskeleton. Its function is as follows. Binds to actin and affects the structure of the cytoskeleton. At high concentrations, profilin prevents the polymerization of actin, whereas it enhances it at low concentrations. By binding to PIP2, it inhibits the formation of IP3 and DG. In Hordeum vulgare (Barley), this protein is Profilin-1 (PRO1).